The sequence spans 283 residues: N-terminal Xaa-Pro-Lys N-methyltransferase 2 (283 aa).

S-adenosyl-L-methionine contacts are provided by residues G124, R129, D146, 174–175, and Q190; that span reads LQ.

The protein belongs to the methyltransferase superfamily. NTM1 family.

The protein localises to the nucleus. The enzyme catalyses N-terminal L-alanyl-L-prolyl-L-lysyl-[protein] + S-adenosyl-L-methionine = N-terminal N-methyl-L-alanyl-L-prolyl-L-lysyl-[protein] + S-adenosyl-L-homocysteine + H(+). It catalyses the reaction N-terminal L-prolyl-L-prolyl-L-lysyl-[protein] + S-adenosyl-L-methionine = N-terminal N-methyl-L-prolyl-L-prolyl-L-lysyl-[protein] + S-adenosyl-L-homocysteine + H(+). The catalysed reaction is N-terminal L-seryl-L-prolyl-L-lysyl-[protein] + S-adenosyl-L-methionine = N-terminal N-methyl-L-seryl-L-prolyl-L-lysyl-[protein] + S-adenosyl-L-homocysteine + H(+). In terms of biological role, alpha N-methyltransferase that methylates the N-terminus of target proteins containing the N-terminal motif [Ala/Pro/Ser]-Pro-Lys when the initiator Met is cleaved. Specifically catalyzes monomethylation of exposed alpha-amino group of Ala or Ser residue in the [Ala/Ser]-Pro-Lys motif and Pro in the Pro-Pro-Lys motif. Predominantly functions as a mono-methyltransferase but is also able to di-/tri-methylate the GPKRIA peptide and di-methylate the PPKRIA peptide (in vitro). May activate NTMT1 by priming its substrates for trimethylation. The protein is N-terminal Xaa-Pro-Lys N-methyltransferase 2 (Ntmt2) of Rattus norvegicus (Rat).